The sequence spans 93 residues: Large ribosomal subunit protein uL23 (93 aa).

Belongs to the universal ribosomal protein uL23 family. Part of the 50S ribosomal subunit. Contacts protein L29, and trigger factor when it is bound to the ribosome.

Functionally, one of the early assembly proteins it binds 23S rRNA. One of the proteins that surrounds the polypeptide exit tunnel on the outside of the ribosome. Forms the main docking site for trigger factor binding to the ribosome. The chain is Large ribosomal subunit protein uL23 from Campylobacter jejuni subsp. jejuni serotype O:6 (strain 81116 / NCTC 11828).